A 148-amino-acid polypeptide reads, in one-letter code: Large-conductance mechanosensitive channel (148 aa).

2 consecutive transmembrane segments (helical) span residues 15 to 35 and 84 to 104; these read LDMA…KSLV and VGVF…VFLL.

This sequence belongs to the MscL family. As to quaternary structure, homopentamer.

The protein resides in the cell inner membrane. In terms of biological role, channel that opens in response to stretch forces in the membrane lipid bilayer. May participate in the regulation of osmotic pressure changes within the cell. The sequence is that of Large-conductance mechanosensitive channel from Nitratidesulfovibrio vulgaris (strain DSM 19637 / Miyazaki F) (Desulfovibrio vulgaris).